A 422-amino-acid chain; its full sequence is Vitamin D3 receptor B (422 aa).

The nuclear receptor DNA-binding region spans 20-95 (PRICGVCGDK…IGMMKEFILT (76 aa)). Zn(2+) is bound by residues cysteine 23, cysteine 26, cysteine 40, cysteine 43, cysteine 59, cysteine 65, cysteine 75, and cysteine 78. 2 NR C4-type zinc fingers span residues 23–43 (CGVCGDKATGFHFNAMTCEGC) and 59–78 (CPFNGSCTITKDNRRHCQAC). Residues 96-125 (DEEVQRKKELIQRRKDEEAHREAQKPRLSD) form a hinge region. The segment at 106–128 (IQRRKDEEAHREAQKPRLSDEQR) is disordered. One can recognise an NR LBD domain in the interval 126 to 418 (EQRNIIDTLV…LTPLVLEVFG (293 aa)). Residue tyrosine 142 coordinates calcitriol. Residues 145-190 (SYSDFSRFRPPVREGPVTRSASRAASLHSLSDASSDSFSHSPESGD) are disordered. Residues 163 to 185 (RSASRAASLHSLSDASSDSFSHS) are compositionally biased toward low complexity. Position 234 (serine 234) interacts with calcitriol. The interaction with coactivator LXXLL motif stretch occupies residues 243–261 (KMIPGFRELTAEDQIALLK). The calcitriol site is built by arginine 271, serine 275, histidine 302, and histidine 392. The 9aaTAD motif lies at 411–419 (PLVLEVFGG).

Belongs to the nuclear hormone receptor family. Homodimer in the absence of bound vitamin D3. Heterodimer with RXRA after vitamin D3 binding. Interacts with ncoa1 and possibly other coactivators, leading to a strong increase of transcription of target genes. In terms of tissue distribution, detected in embryo 24 to 48 hours after fertilization, and in intestinal bulb.

The protein localises to the nucleus. Its subcellular location is the cytoplasm. Its function is as follows. Nuclear receptor for calcitriol, the active form of vitamin D3 which mediates the action of this vitamin on cells. Enters the nucleus upon vitamin D3 binding where it forms heterodimers with the retinoid X receptor/RXR. The VDR-RXR heterodimers bind to specific response elements on DNA and activate the transcription of vitamin D3-responsive target genes. Recruited to promoters via its interaction with BAZ1B/WSTF which mediates the interaction with acetylated histones, an essential step for VDR-promoter association. Plays a central role in calcium homeostasis. This chain is Vitamin D3 receptor B (vdrb), found in Danio rerio (Zebrafish).